Consider the following 656-residue polypeptide: Kinesin-related protein SMY1 (656 aa).

The 338-residue stretch at 27–364 (HIEVILRAIP…LEFGDSIRQI (338 aa)) folds into the Kinesin motor domain. 114–121 (GPSFSGKS) is a binding site for ATP. Phosphothreonine is present on threonine 583.

It belongs to the TRAFAC class myosin-kinesin ATPase superfamily. Kinesin family.

The protein localises to the cytoplasm. It localises to the cytoskeleton. Functionally, possible microtubule-based motor that can interact or substitute with myosin 2 (MYO2). This Saccharomyces cerevisiae (strain ATCC 204508 / S288c) (Baker's yeast) protein is Kinesin-related protein SMY1 (SMY1).